We begin with the raw amino-acid sequence, 675 residues long: Methionine--tRNA ligase (675 aa).

The 'HIGH' region signature appears at 15 to 25 (PYANGSIHLGH). Zn(2+) contacts are provided by Cys146, Cys149, Cys159, and Cys162. Residues 332–336 (KMSKS) carry the 'KMSKS' region motif. Lys335 serves as a coordination point for ATP. Positions 573-675 (DFAKVDMRIA…SGAQPGMQVK (103 aa)) constitute a tRNA-binding domain.

This sequence belongs to the class-I aminoacyl-tRNA synthetase family. MetG type 1 subfamily. Homodimer. It depends on Zn(2+) as a cofactor.

The protein localises to the cytoplasm. It catalyses the reaction tRNA(Met) + L-methionine + ATP = L-methionyl-tRNA(Met) + AMP + diphosphate. In terms of biological role, is required not only for elongation of protein synthesis but also for the initiation of all mRNA translation through initiator tRNA(fMet) aminoacylation. The polypeptide is Methionine--tRNA ligase (Yersinia pseudotuberculosis serotype O:1b (strain IP 31758)).